The chain runs to 155 residues: SsrA-binding protein (155 aa).

This sequence belongs to the SmpB family.

The protein resides in the cytoplasm. Its function is as follows. Required for rescue of stalled ribosomes mediated by trans-translation. Binds to transfer-messenger RNA (tmRNA), required for stable association of tmRNA with ribosomes. tmRNA and SmpB together mimic tRNA shape, replacing the anticodon stem-loop with SmpB. tmRNA is encoded by the ssrA gene; the 2 termini fold to resemble tRNA(Ala) and it encodes a 'tag peptide', a short internal open reading frame. During trans-translation Ala-aminoacylated tmRNA acts like a tRNA, entering the A-site of stalled ribosomes, displacing the stalled mRNA. The ribosome then switches to translate the ORF on the tmRNA; the nascent peptide is terminated with the 'tag peptide' encoded by the tmRNA and targeted for degradation. The ribosome is freed to recommence translation, which seems to be the essential function of trans-translation. The sequence is that of SsrA-binding protein from Halothermothrix orenii (strain H 168 / OCM 544 / DSM 9562).